The sequence spans 735 residues: Capsid protein (735 aa).

Disordered regions lie at residues 577–604 (VVRN…DPKY) and 632–695 (QQAS…TVEQ). Basic and acidic residues predominate over residues 649–666 (EIKGLTEADQEAEKDSGL). Residues 676-685 (SSQETQSEQE) show a composition bias toward low complexity.

This sequence belongs to the anelloviridae capsid protein family.

It is found in the virion. Its function is as follows. Self assemble to form an icosahedral capsid. This chain is Capsid protein, found in Pan troglodytes (Chimpanzee).